The following is a 234-amino-acid chain: MTIYLTELDSTLYFPSPEEALTEPNGLLAIGGDLSPARLLTAYYNGIFPWFSPYQPILWWSPDPRGVLPVAQLHISRSLRKTLNKTSLRFTVNHAFMDVVTACAAPRRYSEDTWITSEFMQSYAVLHEMGQAHSVEVWDNDQLVGGLYGLSVGKLFCGESMFHRQTDASKLALVALCRHLSRYDAPLIDCQMQNSYLETMGVQEWPRAEFLRQLAQLREQSFPAECWQPQVLTL.

This sequence belongs to the L/F-transferase family.

It localises to the cytoplasm. The catalysed reaction is N-terminal L-lysyl-[protein] + L-leucyl-tRNA(Leu) = N-terminal L-leucyl-L-lysyl-[protein] + tRNA(Leu) + H(+). The enzyme catalyses N-terminal L-arginyl-[protein] + L-leucyl-tRNA(Leu) = N-terminal L-leucyl-L-arginyl-[protein] + tRNA(Leu) + H(+). It catalyses the reaction L-phenylalanyl-tRNA(Phe) + an N-terminal L-alpha-aminoacyl-[protein] = an N-terminal L-phenylalanyl-L-alpha-aminoacyl-[protein] + tRNA(Phe). Its function is as follows. Functions in the N-end rule pathway of protein degradation where it conjugates Leu, Phe and, less efficiently, Met from aminoacyl-tRNAs to the N-termini of proteins containing an N-terminal arginine or lysine. In Tolumonas auensis (strain DSM 9187 / NBRC 110442 / TA 4), this protein is Leucyl/phenylalanyl-tRNA--protein transferase.